The following is a 418-amino-acid chain: Serine/threonine transporter SstT (418 aa).

9 helical membrane-spanning segments follow: residues 16 to 36, 45 to 65, 83 to 103, 142 to 162, 192 to 212, 218 to 238, 289 to 309, 317 to 337, and 364 to 384; these read SLVS…TLIP, LGTL…LLLV, LLIL…VASF, ALLE…GLSL, PLGI…SALL, LIVL…LIVF, VSIP…ITVL, LGIS…TISA, and VAMQ…SAET.

This sequence belongs to the dicarboxylate/amino acid:cation symporter (DAACS) (TC 2.A.23) family.

The protein resides in the cell inner membrane. The enzyme catalyses L-serine(in) + Na(+)(in) = L-serine(out) + Na(+)(out). It catalyses the reaction L-threonine(in) + Na(+)(in) = L-threonine(out) + Na(+)(out). Functionally, involved in the import of serine and threonine into the cell, with the concomitant import of sodium (symport system). In Tolumonas auensis (strain DSM 9187 / NBRC 110442 / TA 4), this protein is Serine/threonine transporter SstT.